We begin with the raw amino-acid sequence, 93 residues long: UPF0358 protein RBAM_014700 (93 aa).

This sequence belongs to the UPF0358 family.

The protein is UPF0358 protein RBAM_014700 of Bacillus velezensis (strain DSM 23117 / BGSC 10A6 / LMG 26770 / FZB42) (Bacillus amyloliquefaciens subsp. plantarum).